The primary structure comprises 209 residues: Large ribosomal subunit protein uL3 (209 aa).

N5-methylglutamine is present on Gln150.

This sequence belongs to the universal ribosomal protein uL3 family. Part of the 50S ribosomal subunit. Forms a cluster with proteins L14 and L19. Post-translationally, methylated by PrmB.

One of the primary rRNA binding proteins, it binds directly near the 3'-end of the 23S rRNA, where it nucleates assembly of the 50S subunit. The chain is Large ribosomal subunit protein uL3 from Vibrio vulnificus (strain YJ016).